Reading from the N-terminus, the 404-residue chain is Arginine biosynthesis bifunctional protein ArgJ (404 aa).

Substrate is bound by residues Thr-156, Lys-182, Thr-193, Glu-277, Asn-399, and Ser-404. Thr-193 (nucleophile) is an active-site residue.

This sequence belongs to the ArgJ family. Heterotetramer of two alpha and two beta chains.

The protein localises to the cytoplasm. The enzyme catalyses N(2)-acetyl-L-ornithine + L-glutamate = N-acetyl-L-glutamate + L-ornithine. The catalysed reaction is L-glutamate + acetyl-CoA = N-acetyl-L-glutamate + CoA + H(+). Its pathway is amino-acid biosynthesis; L-arginine biosynthesis; L-ornithine and N-acetyl-L-glutamate from L-glutamate and N(2)-acetyl-L-ornithine (cyclic): step 1/1. It functions in the pathway amino-acid biosynthesis; L-arginine biosynthesis; N(2)-acetyl-L-ornithine from L-glutamate: step 1/4. Catalyzes two activities which are involved in the cyclic version of arginine biosynthesis: the synthesis of N-acetylglutamate from glutamate and acetyl-CoA as the acetyl donor, and of ornithine by transacetylation between N(2)-acetylornithine and glutamate. This chain is Arginine biosynthesis bifunctional protein ArgJ, found in Chlorobaculum tepidum (strain ATCC 49652 / DSM 12025 / NBRC 103806 / TLS) (Chlorobium tepidum).